The following is a 227-amino-acid chain: Transmembrane emp24 domain-containing protein 4 (227 aa).

A signal peptide spans 1-29 (MAGVGVGPLQGMVRFGLLVLTVCAACARG). Topologically, residues 30–194 (LYFHIGETEK…RLTSESTNQR (165 aa)) are lumenal. One can recognise a GOLD domain in the interval 39–137 (KRCFIEEIPD…KLRVHLDIQV (99 aa)). Asparagine 117 carries N-linked (GlcNAc...) asparagine glycosylation. Residues 147–176 (IAAKDKLTELQLRARQLLDQVEQIQKEQDY) adopt a coiled-coil conformation. Residues 195–212 (VLWWSIAQTVILILTGIW) form a helical membrane-spanning segment. Topologically, residues 213–227 (QMRHLKSFFEAKKLV) are cytoplasmic. The COPII vesicle coat-binding motif lies at 220-221 (FF). The short motif at 220 to 227 (FFEAKKLV) is the COPI vesicle coat-binding element.

This sequence belongs to the EMP24/GP25L family.

It localises to the endoplasmic reticulum membrane. Involved in vesicular protein trafficking, mainly in the early secretory pathway. Involved in the maintenance of the Golgi apparatus. Appears to play a role in the biosynthesis of secreted cargo including processing. Involved in endoplasmic reticulum stress response. May play a role in the regulation of heat-shock response and apoptosis. The polypeptide is Transmembrane emp24 domain-containing protein 4 (Tmed4) (Mus musculus (Mouse)).